The following is a 242-amino-acid chain: C-reactive protein 3.3 (242 aa).

Residues methionine 1–alanine 24 form the signal peptide. In terms of domain architecture, Pentraxin (PTX) spans isoleucine 30–cysteine 241. Residues threonine 60 and tyrosine 63 each contribute to the phosphocholine site. 2 disulfide bridges follow: cysteine 62–cysteine 125 and cysteine 112–cysteine 144. 2 residues coordinate Ca(2+): aspartate 85 and asparagine 86. Asparagine 147 carries an N-linked (GlcNAc...) asparagine glycan. Positions 169, 170, and 180 each coordinate Ca(2+). A disulfide bridge links cysteine 207 with cysteine 241.

It belongs to the pentraxin family. Homopentamer. Pentraxin (or pentaxin) have a discoid arrangement of 5 non-covalently bound subunits. The cofactor is Ca(2+).

It is found in the secreted. Its function is as follows. Might serve the role of immunoglobulins. The chain is C-reactive protein 3.3 from Limulus polyphemus (Atlantic horseshoe crab).